The following is a 283-amino-acid chain: D-alanine aminotransferase (283 aa).

Substrate is bound at residue Tyr-32. A pyridoxal 5'-phosphate-binding site is contributed by Arg-51. 2 residues coordinate substrate: Arg-99 and His-101. Lys-146 serves as the catalytic Proton acceptor. Position 146 is an N6-(pyridoxal phosphate)lysine (Lys-146). Glu-178 contacts pyridoxal 5'-phosphate.

This sequence belongs to the class-IV pyridoxal-phosphate-dependent aminotransferase family. Homodimer. Pyridoxal 5'-phosphate is required as a cofactor.

It catalyses the reaction D-alanine + 2-oxoglutarate = D-glutamate + pyruvate. Functionally, acts on the D-isomers of alanine, leucine, aspartate, glutamate, aminobutyrate, norvaline and asparagine. The enzyme transfers an amino group from a substrate D-amino acid to the pyridoxal phosphate cofactor to form pyridoxamine and an alpha-keto acid in the first half-reaction. The second-half reaction is the reverse of the first, transferring the amino group from the pyridoxamine to a second alpha-keto acid to form the product D-amino acid via a ping-pong mechanism. This is an important process in the formation of D-alanine and D-glutamate, which are essential bacterial cell wall components. This Bacillus sp. (strain YM-1) protein is D-alanine aminotransferase (dat).